The chain runs to 506 residues: Mitogen-activated protein kinase 13 (506 aa).

The region spanning 13 to 304 is the Protein kinase domain; that stretch reads YQIQEVVGKG…AEEALADPYF (292 aa). ATP is bound by residues 19 to 27 and lysine 42; that span reads VGKGSYGVV. The active-site Proton acceptor is the aspartate 139. At threonine 175 the chain carries Phosphothreonine. The TXY motif lies at 175-177; that stretch reads TDY. Tyrosine 177 is subject to Phosphotyrosine. Residues 384–421 are disordered; it reads YSRGERSTPLRRQHASLPRERVCSSVDSNNQDSDNEER.

It belongs to the protein kinase superfamily. CMGC Ser/Thr protein kinase family. MAP kinase subfamily. Post-translationally, dually phosphorylated on Thr-175 and Tyr-177, which activates the enzyme.

It carries out the reaction L-seryl-[protein] + ATP = O-phospho-L-seryl-[protein] + ADP + H(+). The enzyme catalyses L-threonyl-[protein] + ATP = O-phospho-L-threonyl-[protein] + ADP + H(+). With respect to regulation, activated by threonine and tyrosine phosphorylation. The protein is Mitogen-activated protein kinase 13 (MPK13) of Oryza sativa subsp. indica (Rice).